The sequence spans 379 residues: MKLFEDKSVEFHKRLSKKERSDGGVFFTPKDIRDIVFEELGDFEPTNILEPTCGTGEFISDCRKVYKNSRIIGVEIDPRSAELARDGSKNEIIVHDFMTWDTDEKFDLIIGNPPYFTRPTGFKHDPSVVKCRSNICIEVLHKCITRHLADNGMLAMVLPVSILNSKFYTPTIDLITDTMDVVSARAIKKNNFMGTNVRVMVFIIRKRTPGFVSKYTFKTSLGKVIINPDGERLGSIVSGKKTIGSLNVNISFGVTLASVKEYFVDKSCSGSFPLICYNNIAKKGDLLFVSDKYSKKRFNGRAILIPRGYAHGDYSFNFIDYTNDYFIIENHVIAITGEDCVLDIIAKSFADHRTREFCRLLCSSGDISKDYVKEIPVFG.

The protein belongs to the N(4)/N(6)-methyltransferase family.

It carries out the reaction a 2'-deoxyadenosine in DNA + S-adenosyl-L-methionine = an N(6)-methyl-2'-deoxyadenosine in DNA + S-adenosyl-L-homocysteine + H(+). Functionally, a gamma subtype methylase, recognizes the double-stranded sequence 5'-TGCA-3', methylates A-4 on both strands, and protects the DNA from cleavage by the CviRI endonuclease. The chain is Type II methyltransferase M.CvrRI (CVIRIM) from Chlorella (PBCV-XZ-6E).